We begin with the raw amino-acid sequence, 573 residues long: Proline--tRNA ligase (573 aa).

The protein belongs to the class-II aminoacyl-tRNA synthetase family. ProS type 1 subfamily. Homodimer.

Its subcellular location is the cytoplasm. It catalyses the reaction tRNA(Pro) + L-proline + ATP = L-prolyl-tRNA(Pro) + AMP + diphosphate. Catalyzes the attachment of proline to tRNA(Pro) in a two-step reaction: proline is first activated by ATP to form Pro-AMP and then transferred to the acceptor end of tRNA(Pro). As ProRS can inadvertently accommodate and process non-cognate amino acids such as alanine and cysteine, to avoid such errors it has two additional distinct editing activities against alanine. One activity is designated as 'pretransfer' editing and involves the tRNA(Pro)-independent hydrolysis of activated Ala-AMP. The other activity is designated 'posttransfer' editing and involves deacylation of mischarged Ala-tRNA(Pro). The misacylated Cys-tRNA(Pro) is not edited by ProRS. The sequence is that of Proline--tRNA ligase from Elusimicrobium minutum (strain Pei191).